The sequence spans 1310 residues: Adhesion G protein-coupled receptor A3 (1310 aa).

Residues 1–27 (MEPPPPLLLLPLALLALLWGGERGAAA) form the signal peptide. The LRRNT domain occupies 28–70 (LPAGCKHDGRARGTGRAAAAAEGKVVCSSLELAQVLPPDTLPN). Residues 28 to 747 (LPAGCKHDGR…TELYTPAASL (720 aa)) are Extracellular-facing. Residues Asn-70 and Asn-87 are each glycosylated (N-linked (GlcNAc...) asparagine). LRR repeat units lie at residues 71-92 (RTVT…SFSG), 95-116 (LLER…AFWG), 119-140 (SLKR…VFRG), and 143-164 (NLVR…TFDY). N-linked (GlcNAc...) asparagine glycosylation is found at Asn-148, Asn-195, Asn-290, Asn-321, Asn-422, Asn-442, Asn-581, Asn-641, Asn-676, and Asn-717. The LRRCT domain maps to 176–226 (EYLLCDCNILWMHRWVKERNITVRDTRCVYPKSLQAQPVTGVKQELLTCDP). One can recognise an Ig-like domain in the interval 231-329 (PSFYMTPSHR…GNNTRTVDIV (99 aa)). A disulfide bridge connects residues Cys-253 and Cys-313. In terms of domain architecture, GAIN-B spans 572-739 (LDKQLSFKCN…AVLMDLTGTE (168 aa)). A GPS region spans residues 690–739 (AAQWDFDLLNGQGGWKSDGCCILYSDENITTIQCGSLGNYAVLMDLTGTE). Residues Cys-709 and Cys-723 are joined by a disulfide bond. The chain crosses the membrane as a helical span at residues 748–768 (LHPVVYTTAITLLLCLLAVII). At 769-785 (SYMYHHSLIRISLKSWH) the chain is on the cytoplasmic side. A helical transmembrane segment spans residues 786–806 (MLVNLCFHILLTCVVFVGGIT). Residues 807 to 815 (QTRNASVCQ) are Extracellular-facing. A glycan (N-linked (GlcNAc...) asparagine) is linked at Asn-810. Residues 816-836 (AVGIILHYSTLATVLWVGVTA) traverse the membrane as a helical segment. Residues 837–865 (RNIYKQVTKKAKRCQDPDEPPAPPRPMLR) are Cytoplasmic-facing. A helical membrane pass occupies residues 866-886 (FYLIGGGIPIIVCGITAAANI). The Extracellular segment spans residues 887–908 (KNYGSRPSAPYCWMAWEPSLGA). Residues 909-929 (FYGPASFITFVNCMYFLSIFI) form a helical membrane-spanning segment. The Cytoplasmic segment spans residues 930-985 (QLKRHPERKYELKEPTEEQQRLAANENGEINHQDSMSLSLISTSTLENEHSFQSQL). Residues 986–1006 (LGASLTLLLYVILWMFGAMAV) form a helical membrane-spanning segment. Residues 1007 to 1013 (SLYYPLD) are Extracellular-facing. Residues 1014–1034 (LVFSFFFGATCLSFSAFMMVH) traverse the membrane as a helical segment. Over 1035-1310 (HCINREDVRL…TGLWKHETTV (276 aa)) the chain is Cytoplasmic. Disordered stretches follow at residues 1065–1084 (PPNS…SSAE), 1187–1208 (VEGS…GHSR), and 1221–1264 (YNPP…ADLE). A compositionally biased stretch (polar residues) spans 1222–1239 (NPPQQDSSDACSTLPKSS). Residues 1308 to 1310 (TTV) carry the PDZ-binding motif.

It belongs to the G-protein coupled receptor 2 family. Adhesion G-protein coupled receptor (ADGR) subfamily. In terms of assembly, interacts (via PDZ-binding motif) with DLG1. As to expression, expressed by spermatogonial progenitor cells located within the outer cell layer of the seminiferous tubule and by multipotent adult spermatogonial-derived stem cells.

It is found in the membrane. In terms of biological role, orphan receptor that may have a role in planar cell polarity pathway. In Mus musculus (Mouse), this protein is Adhesion G protein-coupled receptor A3 (Adgra3).